The sequence spans 513 residues: Tyrosine-protein phosphatase non-receptor type substrate 1 (513 aa).

Positions 1–31 (MEPAGPAPGRLGPLLLCLLLSASCFCTGATG) are cleaved as a signal peptide. Residues 32-137 (KELKVTQPEK…SSEPDTEIQS (106 aa)) enclose the Ig-like V-type domain. Residues 32–373 (KELKVTQPEK…PDNNATHNWN (342 aa)) lie on the Extracellular side of the membrane. Asparagine 54, asparagine 92, asparagine 168, asparagine 180, asparagine 205, asparagine 209, asparagine 246, asparagine 271, asparagine 293, asparagine 302, asparagine 312, asparagine 320, asparagine 345, and asparagine 367 each carry an N-linked (GlcNAc...) asparagine glycan. Cysteine 55 and cysteine 121 form a disulfide bridge. Ig-like C1-type domains follow at residues 149–248 (PSPP…ANLS) and 255–343 (PTVK…PAIT). The cysteines at positions 171 and 229 are disulfide-linked. Cysteine 274 and cysteine 332 are oxidised to a cystine. A helical membrane pass occupies residues 374 to 394 (VFIGVGVACALLVVLLMAALY). The Cytoplasmic portion of the chain corresponds to 395–511 (LLRIKQKKAK…FSEYASVQVQ (117 aa)). Phosphotyrosine; by Tyr-kinases is present on tyrosine 440. Positions 440 to 443 (YADL) match the SH2-binding motif. The disordered stretch occupies residues 444-513 (NLPKEKKPAP…EYASVQVQRK (70 aa)). The short motif at 450–455 (KPAPRA) is the SH3-binding element. 3 positions are modified to phosphotyrosine; by Tyr-kinases: tyrosine 464, tyrosine 481, and tyrosine 505. Short sequence motifs (SH2-binding) lie at residues 464 to 467 (YASI), 481 to 484 (YADL), and 505 to 508 (YASV). A compositionally biased stretch (polar residues) spans 504–513 (EYASVQVQRK).

Binds PTPN11 when tyrosine-phosphorylated, except in macrophages, where it primarily binds PTPN6. Binds GRB2 vitro. Binds FGR. Binds JAK2 irrespective of its phosphorylation status and forms a stable complex. Binds SCAP1 and/or SCAP2. The resulting complex recruits FYB1. Binds PTK2B. Interacts with TRIM2. Post-translationally, N-glycosylated. In terms of processing, phosphorylated on tyrosine residues. As to expression, highly expressed in cerebral cortex, brain, spinal cord, cerebellum and spleen, and at much lower levels in kidney, thymus, heart, lung and liver. Within the cerebellum, highly expressed throughout the molecular layer, and in synaptic glomeruli in the granule cell layer. Detected in neurons of the hippocampus and dentate gyrus, and in olfactory bulb. Not detected in Purkinje cells. Highly expressed in the plexiform layers, optic fiber layer and the outer segments of the photoreceptor layer in the retina. Highly expressed in macrophages. Isoform 3 is detected at very low levels in all tissues tested.

The protein localises to the membrane. Immunoglobulin-like cell surface receptor for CD47. Acts as a docking protein and induces translocation of PTPN6, PTPN11 and other binding partners from the cytosol to the plasma membrane. Supports adhesion of cerebellar neurons, neurite outgrowth and glial cell attachment. May play a key role in intracellular signaling during synaptogenesis and in synaptic function. Involved in the negative regulation of receptor tyrosine kinase-coupled cellular responses induced by cell adhesion, growth factors or insulin. Mediates negative regulation of phagocytosis, mast cell activation and dendritic cell activation. CD47 binding prevents maturation of immature dendritic cells and inhibits cytokine production by mature dendritic cells. Plays a role in antiviral immunity and limits new world arenavirus infection by decreasing virus internalization. Receptor for THBS1. Interaction with THBS1 stimulates phosphorylation of SIRPA. In response to THBS1, involved in ROS signaling in non-phagocytic cells, stimulating NADPH oxidase-derived ROS production. The protein is Tyrosine-protein phosphatase non-receptor type substrate 1 (Sirpa) of Mus musculus (Mouse).